The sequence spans 164 residues: ATP synthase subunit b (164 aa).

Residues F8–F28 traverse the membrane as a helical segment.

This sequence belongs to the ATPase B chain family. In terms of assembly, F-type ATPases have 2 components, F(1) - the catalytic core - and F(0) - the membrane proton channel. F(1) has five subunits: alpha(3), beta(3), gamma(1), delta(1), epsilon(1). F(0) has three main subunits: a(1), b(2) and c(10-14). The alpha and beta chains form an alternating ring which encloses part of the gamma chain. F(1) is attached to F(0) by a central stalk formed by the gamma and epsilon chains, while a peripheral stalk is formed by the delta and b chains.

The protein localises to the cell membrane. F(1)F(0) ATP synthase produces ATP from ADP in the presence of a proton or sodium gradient. F-type ATPases consist of two structural domains, F(1) containing the extramembraneous catalytic core and F(0) containing the membrane proton channel, linked together by a central stalk and a peripheral stalk. During catalysis, ATP synthesis in the catalytic domain of F(1) is coupled via a rotary mechanism of the central stalk subunits to proton translocation. In terms of biological role, component of the F(0) channel, it forms part of the peripheral stalk, linking F(1) to F(0). The chain is ATP synthase subunit b from Amoebophilus asiaticus (strain 5a2).